The primary structure comprises 385 residues: MGILGLSKLIADLAPQAIRESEMKHFFGRKVAIDASMCLYQFLIAVRSEGAQLATVNGDPTSHLMGMFYRTIRLLDNGIKPVYVFDGKPPDLKSGELAKRAERREEAEKALKAATDAGDDAGIEKFNRRLVRVTKEHAKEAKELLTLMGVPYVDAPCEAEAQCAALVKAGKVYATATEDMDALTFGSTKLLRYLTYSEARKMPVKEFSYDKLLEGLAINNREFIDLCILLGCDYCESIKGIGPKRAIELINTYRDIETILDNLDSSKYTVPENWNYKVARELFIEPEVANADSIDLKWVEPDEEGLVKFLCGDRQFNEERVRNGAKKLMKSKQAQTQVRLDSFFKTLPSTPNATNAAKRKADEAKKSANNKKAKTSGGGRGRRPK.

Positions 1–104 are N-domain; the sequence is MGILGLSKLI…GELAKRAERR (104 aa). Aspartate 34 serves as a coordination point for Mg(2+). Residues arginine 47 and arginine 70 each coordinate DNA. Residues aspartate 86, glutamate 158, glutamate 160, aspartate 179, and aspartate 181 each contribute to the Mg(2+) site. The tract at residues 122–253 is I-domain; it reads GIEKFNRRLV…KRAIELINTY (132 aa). Glutamate 158 contacts DNA. The DNA site is built by glycine 231 and aspartate 233. Aspartate 233 contributes to the Mg(2+) binding site. Positions 336–344 are interaction with PCNA; the sequence is TQVRLDSFF. A disordered region spans residues 346–385; that stretch reads TLPSTPNATNAAKRKADEAKKSANNKKAKTSGGGRGRRPK. The span at 368-385 shows a compositional bias: basic residues; that stretch reads ANNKKAKTSGGGRGRRPK.

It belongs to the XPG/RAD2 endonuclease family. FEN1 subfamily. Interacts with PCNA. Three molecules of FEN1 bind to one PCNA trimer with each molecule binding to one PCNA monomer. PCNA stimulates the nuclease activity without altering cleavage specificity. The cofactor is Mg(2+). In terms of processing, phosphorylated. Phosphorylation upon DNA damage induces relocalization to the nuclear plasma.

It is found in the nucleus. The protein localises to the nucleolus. The protein resides in the nucleoplasm. It localises to the mitochondrion. Structure-specific nuclease with 5'-flap endonuclease and 5'-3' exonuclease activities involved in DNA replication and repair. During DNA replication, cleaves the 5'-overhanging flap structure that is generated by displacement synthesis when DNA polymerase encounters the 5'-end of a downstream Okazaki fragment. It enters the flap from the 5'-end and then tracks to cleave the flap base, leaving a nick for ligation. Also involved in the long patch base excision repair (LP-BER) pathway, by cleaving within the apurinic/apyrimidinic (AP) site-terminated flap. Acts as a genome stabilization factor that prevents flaps from equilibrating into structures that lead to duplications and deletions. Also possesses 5'-3' exonuclease activity on nicked or gapped double-stranded DNA, and exhibits RNase H activity. Also involved in replication and repair of rDNA and in repairing mitochondrial DNA. The polypeptide is Flap endonuclease 1 (Drosophila sechellia (Fruit fly)).